A 29-amino-acid polypeptide reads, in one-letter code: Cyclotide psyleio C (29 aa).

Positions 1–29 form a cross-link, cyclopeptide (Gly-Arg); it reads GDLPVCGETCFGGTCNTPGCVCAWPVCTR. Intrachain disulfides connect C6/C20, C10/C22, and C15/C27.

In terms of processing, this is a cyclic peptide.

Functionally, probably participates in a plant defense mechanism. The chain is Cyclotide psyleio C from Psychotria leiocarpa.